The following is a 353-amino-acid chain: Phosphate acyltransferase (353 aa).

The protein belongs to the PlsX family. Homodimer. Probably interacts with PlsY.

The protein resides in the cytoplasm. It catalyses the reaction a fatty acyl-[ACP] + phosphate = an acyl phosphate + holo-[ACP]. Its pathway is lipid metabolism; phospholipid metabolism. Catalyzes the reversible formation of acyl-phosphate (acyl-PO(4)) from acyl-[acyl-carrier-protein] (acyl-ACP). This enzyme utilizes acyl-ACP as fatty acyl donor, but not acyl-CoA. The protein is Phosphate acyltransferase of Agrobacterium fabrum (strain C58 / ATCC 33970) (Agrobacterium tumefaciens (strain C58)).